The following is an 89-amino-acid chain: Small ribosomal subunit protein uS15 (89 aa).

It belongs to the universal ribosomal protein uS15 family. As to quaternary structure, part of the 30S ribosomal subunit. Forms a bridge to the 50S subunit in the 70S ribosome, contacting the 23S rRNA.

One of the primary rRNA binding proteins, it binds directly to 16S rRNA where it helps nucleate assembly of the platform of the 30S subunit by binding and bridging several RNA helices of the 16S rRNA. In terms of biological role, forms an intersubunit bridge (bridge B4) with the 23S rRNA of the 50S subunit in the ribosome. The polypeptide is Small ribosomal subunit protein uS15 (Renibacterium salmoninarum (strain ATCC 33209 / DSM 20767 / JCM 11484 / NBRC 15589 / NCIMB 2235)).